We begin with the raw amino-acid sequence, 1527 residues long: ATP-binding cassette sub-family C member 3 (1527 aa).

At 1-32 (MDALCGSGELGSKFWDSNLSVHTENPDLTPCF) the chain is on the extracellular side. N-linked (GlcNAc...) asparagine glycosylation occurs at Asn-18. A helical transmembrane segment spans residues 33 to 53 (QNSLLAWVPCIYLWVALPCYL). At 54-73 (LYLRHHCRGYIILSHLSKLK) the chain is on the cytoplasmic side. A helical membrane pass occupies residues 74–94 (MVLGVLLWCVSWADLFYSFHG). At 95–99 (LVHGR) the chain is on the extracellular side. The helical transmembrane segment at 100–120 (APAPVFFVTPLVVGVTMLLAT) threads the bilayer. At 121-132 (LLIQYERLQGVQ) the chain is on the cytoplasmic side. A helical membrane pass occupies residues 133–153 (SSGVLIIFWFLCVVCAIVPFR). Over 154-171 (SKILLAKAEGEISDPFRF) the chain is Extracellular. The chain crosses the membrane as a helical span at residues 172 to 192 (TTFYIHFALVLSALILACFRE). Topologically, residues 193-302 (KPPFFSAKNV…RPRKPSFLKA (110 aa)) are cytoplasmic. A helical transmembrane segment spans residues 303–323 (LLATFGSSFLISACFKLIQDL). Positions 311–594 (FLISACFKLI…LPQLISNLTQ (284 aa)) constitute an ABC transmembrane type-1 1 domain. The Extracellular portion of the chain corresponds to 324-349 (LSFINPQLLSILIRFISNPMAPSWWG). Residues 350–370 (FLVAGLMFLCSMMQSLILQHY) form a helical membrane-spanning segment. Residues 371-426 (YHYIFVTGVKFRTGIMGVIYRKALVITNSVKRASTVGEIVNLMSVDAQRFMDLAPF) lie on the Cytoplasmic side of the membrane. Residues 427–447 (LNLLWSAPLQIILAIYFLWQN) form a helical membrane-spanning segment. At 448-450 (LGP) the chain is on the extracellular side. Residues 451 to 471 (SVLAGVAFMVLLIPLNGAVAV) traverse the membrane as a helical segment. Over 472–533 (KMRAFQVKQM…LLRTAAYLHT (62 aa)) the chain is Cytoplasmic. The chain crosses the membrane as a helical span at residues 534–554 (TTTFTWMCSPFLVTLITLWVY). At 555–576 (VYVDPNNVLDAEKAFVSVSLFN) the chain is on the extracellular side. A helical membrane pass occupies residues 577–597 (ILRLPLNMLPQLISNLTQASV). Residues 598–963 (SLKRIQQFLS…VELSVFWDYA (366 aa)) are Cytoplasmic-facing. The ABC transporter 1 domain maps to 629–851 (IHSGTFTWAQ…NGSFANFLCN (223 aa)). 661-668 (GPVGCGKS) is a binding site for ATP. Phosphoserine occurs at positions 908 and 911. The segment at 910-932 (LSSDGEGQGRPVPRRHLGPSEKV) is disordered. A helical membrane pass occupies residues 964–984 (KAVGLCTTLAICLLYVGQSAA). The ABC transmembrane type-1 2 domain maps to 971–1252 (TLAICLLYVG…MIRMMSDLES (282 aa)). Topologically, residues 985 to 1021 (AIGANVWLSAWTNDAMADSRQNNTSLRLGVYAALGIL) are extracellular. 2 N-linked (GlcNAc...) asparagine glycosylation sites follow: Asn-1006 and Asn-1007. Residues 1022 to 1042 (QGFLVMLAAMAMAAGGIQAAR) traverse the membrane as a helical segment. Topologically, residues 1043-1085 (VLHQALLHNKIRSPQSFFDTTPSGRILNCFSKDIYVVDEVLAP) are cytoplasmic. A helical transmembrane segment spans residues 1086–1106 (VILMLLNSFFNAISTLVVIMA). Ser-1107 is a topological domain (extracellular). The chain crosses the membrane as a helical span at residues 1108 to 1128 (TPLFTVVILPLAVLYTLVQRF). Residues 1129–1199 (YAATSRQLKR…ISNRWLSIGV (71 aa)) are Cytoplasmic-facing. The helical transmembrane segment at 1200–1220 (EFVGNCVVLFAALFAVIGRSS) threads the bilayer. At 1221-1222 (LN) the chain is on the extracellular side. The helical transmembrane segment at 1223 to 1243 (PGLVGLSVSYSLQVTFALNWM) threads the bilayer. The Cytoplasmic portion of the chain corresponds to 1244–1527 (IRMMSDLESN…YGMARDAGLA (284 aa)). Residues 1291 to 1523 (FRNYSVRYRP…RGIFYGMARD (233 aa)) form the ABC transporter 2 domain. 1323 to 1330 (GRTGAGKS) serves as a coordination point for ATP.

It belongs to the ABC transporter superfamily. ABCC family. Conjugate transporter (TC 3.A.1.208) subfamily. As to expression, mainly expressed in the liver. Also expressed in small intestine, colon, prostate, testis, brain and at a lower level in the kidney. In testis, localized to peritubular myoid cells, Leydig cells, along the basal membrane of Sertoli cells and moderately in the adluminal compartment of the seminiferous tubules.

The protein resides in the basolateral cell membrane. It is found in the basal cell membrane. The enzyme catalyses taurocholate(in) + ATP + H2O = taurocholate(out) + ADP + phosphate + H(+). It carries out the reaction glycocholate(in) + ATP + H2O = glycocholate(out) + ADP + phosphate + H(+). It catalyses the reaction taurolithocholate 3-sulfate(in) + ATP + H2O = taurolithocholate 3-sulfate(out) + ADP + phosphate + H(+). The catalysed reaction is taurochenodeoxycholate 3-sulfate(in) + ATP + H2O = taurochenodeoxycholate 3-sulfate(out) + ADP + phosphate + H(+). The enzyme catalyses an S-substituted glutathione(in) + ATP + H2O = an S-substituted glutathione(out) + ADP + phosphate + H(+). It carries out the reaction ATP + H2O + xenobioticSide 1 = ADP + phosphate + xenobioticSide 2.. It catalyses the reaction 17beta-estradiol 17-O-(beta-D-glucuronate)(in) + ATP + H2O = 17beta-estradiol 17-O-(beta-D-glucuronate)(out) + ADP + phosphate + H(+). The catalysed reaction is dehydroepiandrosterone 3-sulfate(in) + ATP + H2O = dehydroepiandrosterone 3-sulfate(out) + ADP + phosphate + H(+). The enzyme catalyses leukotriene C4(in) + ATP + H2O = leukotriene C4(out) + ADP + phosphate + H(+). It carries out the reaction (4Z,15Z)-bilirubin IXalpha C8-beta-D-glucuronoside(in) + ATP + H2O = (4Z,15Z)-bilirubin IXalpha C8-beta-D-glucuronoside(out) + ADP + phosphate + H(+). It catalyses the reaction (4Z,15Z)-bilirubin IXalpha C8,C12-beta-D-bisglucuronoside(in) + ATP + H2O = (4Z,15Z)-bilirubin IXalpha C8,C12-beta-D-bisglucuronoside(out) + ADP + phosphate + H(+). Its function is as follows. ATP-dependent transporter of the ATP-binding cassette (ABC) family that binds and hydrolyzes ATP to enable active transport of various substrates including many drugs, toxicants and endogenous compound across cell membranes. Transports glucuronide conjugates such as bilirubin diglucuronide, estradiol-17-beta-o-glucuronide and GSH conjugates such as leukotriene C4 (LTC4). Transports also various bile salts (taurocholate, glycocholate, taurochenodeoxycholate-3-sulfate, taurolithocholate- 3-sulfate). Does not contribute substantially to bile salt physiology but provides an alternative route for the export of bile acids and glucuronides from cholestatic hepatocytes. May contribute to regulate the transport of organic compounds in testes across the blood-testis-barrier. Can confer resistance to various anticancer drugs, methotrexate, tenoposide and etoposide, by decreasing accumulation of these drugs in cells. The protein is ATP-binding cassette sub-family C member 3 of Homo sapiens (Human).